A 468-amino-acid chain; its full sequence is uncharacterized protein (468 aa).

The next 12 membrane-spanning stretches (helical) occupy residues 13-33, 40-60, 76-96, 112-132, 141-161, 194-214, 237-257, 260-280, 328-348, 354-374, 414-434, and 443-463; these read LEAF…YALF, LMII…HCYL, ALLI…GGTI, LYVT…TSWG, FMGV…AVVA, LLYT…VYGL, VYHF…GSIT, PTIP…ILIQ, CFCA…TVII, FVHS…TMIG, IIEP…TLGV, and AILC…GIGI.

The protein belongs to the NhaC Na(+)/H(+) (TC 2.A.35) antiporter family.

The protein resides in the cell membrane. This is an uncharacterized protein from Haemophilus influenzae (strain ATCC 51907 / DSM 11121 / KW20 / Rd).